Reading from the N-terminus, the 307-residue chain is tRNA dimethylallyltransferase (307 aa).

11–18 lines the ATP pocket; it reads GPTGSGKT. 13-18 contributes to the substrate binding site; sequence TGSGKT. The interaction with substrate tRNA stretch occupies residues 36 to 39; the sequence is DSVA.

It belongs to the IPP transferase family. As to quaternary structure, monomer. It depends on Mg(2+) as a cofactor.

The catalysed reaction is adenosine(37) in tRNA + dimethylallyl diphosphate = N(6)-dimethylallyladenosine(37) in tRNA + diphosphate. Functionally, catalyzes the transfer of a dimethylallyl group onto the adenine at position 37 in tRNAs that read codons beginning with uridine, leading to the formation of N6-(dimethylallyl)adenosine (i(6)A). This chain is tRNA dimethylallyltransferase, found in Koribacter versatilis (strain Ellin345).